A 164-amino-acid chain; its full sequence is Protein phosphatase 1 regulatory subunit 14C (164 aa).

Residues 1-19 are compositionally biased toward gly residues; it reads MSVVTGGGEAAGGGGGGGA. The disordered stretch occupies residues 1–70; the sequence is MSVVTGGGEA…QQQRRHQQGK (70 aa). Ser-2 carries the post-translational modification N-acetylserine. At Ser-25 the chain carries Phosphoserine. An Omega-N-methylarginine modification is found at Arg-27. Phosphoserine is present on Ser-33. Residues 50 to 62 show a composition bias toward low complexity; it reads VTTVAAAGQVQQQ. At Thr-72 the chain carries Phosphothreonine; by ILK1.

Belongs to the PP1 inhibitor family. The main inhibitory site appears to be Thr-72. Has over 600-fold higher inhibitory activity when phosphorylated, creating a molecular switch for regulating the phosphorylation status of PPP1CA substrates and smooth muscle contraction. As to expression, detected in heart, muscle, spinal cord, hippocampus, hypothalamus, thalamus, midbrain, brain stem, cerebellum, brain cortex and olfactory bulb.

Its subcellular location is the endomembrane system. In terms of biological role, inhibitor of the PP1 regulatory subunit PPP1CA. The polypeptide is Protein phosphatase 1 regulatory subunit 14C (Ppp1r14c) (Mus musculus (Mouse)).